A 363-amino-acid chain; its full sequence is UDP-3-O-acylglucosamine N-acyltransferase (363 aa).

The active-site Proton acceptor is the His266.

It belongs to the transferase hexapeptide repeat family. LpxD subfamily. As to quaternary structure, homotrimer.

It carries out the reaction a UDP-3-O-[(3R)-3-hydroxyacyl]-alpha-D-glucosamine + a (3R)-hydroxyacyl-[ACP] = a UDP-2-N,3-O-bis[(3R)-3-hydroxyacyl]-alpha-D-glucosamine + holo-[ACP] + H(+). The protein operates within bacterial outer membrane biogenesis; LPS lipid A biosynthesis. Its function is as follows. Catalyzes the N-acylation of UDP-3-O-acylglucosamine using 3-hydroxyacyl-ACP as the acyl donor. Is involved in the biosynthesis of lipid A, a phosphorylated glycolipid that anchors the lipopolysaccharide to the outer membrane of the cell. The polypeptide is UDP-3-O-acylglucosamine N-acyltransferase (Bordetella bronchiseptica (strain ATCC BAA-588 / NCTC 13252 / RB50) (Alcaligenes bronchisepticus)).